Here is a 649-residue protein sequence, read N- to C-terminus: 1-deoxy-D-xylulose-5-phosphate synthase (649 aa).

Thiamine diphosphate contacts are provided by residues His74 and 115–117 (GHA). Asp146 is a Mg(2+) binding site. Thiamine diphosphate is bound by residues 147–148 (GA), Asn176, Tyr292, and Glu375. Asn176 serves as a coordination point for Mg(2+).

This sequence belongs to the transketolase family. DXPS subfamily. In terms of assembly, homodimer. It depends on Mg(2+) as a cofactor. The cofactor is thiamine diphosphate.

It carries out the reaction D-glyceraldehyde 3-phosphate + pyruvate + H(+) = 1-deoxy-D-xylulose 5-phosphate + CO2. Its pathway is metabolic intermediate biosynthesis; 1-deoxy-D-xylulose 5-phosphate biosynthesis; 1-deoxy-D-xylulose 5-phosphate from D-glyceraldehyde 3-phosphate and pyruvate: step 1/1. Its function is as follows. Catalyzes the acyloin condensation reaction between C atoms 2 and 3 of pyruvate and glyceraldehyde 3-phosphate to yield 1-deoxy-D-xylulose-5-phosphate (DXP). The sequence is that of 1-deoxy-D-xylulose-5-phosphate synthase from Synechococcus sp. (strain JA-3-3Ab) (Cyanobacteria bacterium Yellowstone A-Prime).